We begin with the raw amino-acid sequence, 187 residues long: MKIAQELRAGSTIKIGNDPFVVLKAEYNKSGRNAAVVKFKMKNLISGNISDAVYKADDKMDDIKLDKVKAIYSYQNGDSYIFSNPETWEEIELKGEDLGDALNYLEEEMPLDVVYYESTAVAVELPTFVEREVTYTEPGLRGDTSGKVMKPARINTGFEVQVPLFVEQGEWIKIDTRTNEYVERVKK.

Belongs to the elongation factor P family.

Its subcellular location is the cytoplasm. It participates in protein biosynthesis; polypeptide chain elongation. Its function is as follows. Involved in peptide bond synthesis. Stimulates efficient translation and peptide-bond synthesis on native or reconstituted 70S ribosomes in vitro. Probably functions indirectly by altering the affinity of the ribosome for aminoacyl-tRNA, thus increasing their reactivity as acceptors for peptidyl transferase. The protein is Elongation factor P of Fusobacterium nucleatum subsp. nucleatum (strain ATCC 25586 / DSM 15643 / BCRC 10681 / CIP 101130 / JCM 8532 / KCTC 2640 / LMG 13131 / VPI 4355).